The primary structure comprises 231 residues: RING finger protein 141 (231 aa).

Residue Gly-2 is the site of N-myristoyl glycine attachment. The RING-type zinc-finger motif lies at 156–193 (CCICMDGRADLILPCAHSFCQKCIDKWSDRHRNCPICR).

It is found in the membrane. Functionally, may be involved in spermatogenesis. The sequence is that of RING finger protein 141 (RNF141) from Canis lupus familiaris (Dog).